A 245-amino-acid chain; its full sequence is 5-oxoprolinase subunit A (245 aa).

Belongs to the LamB/PxpA family. In terms of assembly, forms a complex composed of PxpA, PxpB and PxpC.

It carries out the reaction 5-oxo-L-proline + ATP + 2 H2O = L-glutamate + ADP + phosphate + H(+). Functionally, catalyzes the cleavage of 5-oxoproline to form L-glutamate coupled to the hydrolysis of ATP to ADP and inorganic phosphate. The sequence is that of 5-oxoprolinase subunit A from Haemophilus influenzae (strain 86-028NP).